Here is a 480-residue protein sequence, read N- to C-terminus: Sestrin-2 (480 aa).

Methionine 1 carries the post-translational modification N-acetylmethionine. Residues 20 to 45 (PGGVGDSGPGEEQRESRARRGPRGPS) are disordered. The tract at residues 66–239 (GLEALMSSGR…APTPPSEQSS (174 aa)) is N-terminal domain; mediates the alkylhydroperoxide reductase activity. The active-site Cysteine sulfenic acid (-SOH) intermediate is the cysteine 125. Lysine 175 participates in a covalent cross-link: Glycyl lysine isopeptide (Lys-Gly) (interchain with G-Cter in ubiquitin). The tract at residues 222-252 (ADGSPAPQAPTPPSEQSSPPSRDPLNNSGGF) is disordered. Phosphoserine is present on serine 249. The C-terminal domain; mediates TORC1 regulation stretch occupies residues 308–480 (PHPDMLCFVE…ALRAITRYMT (173 aa)). L-leucine contacts are provided by residues 374–377 (TYNT), threonine 386, and glutamate 451.

This sequence belongs to the sestrin family. As to quaternary structure, interacts with the GATOR2 complex which is composed of MIOS, SEC13, SEH1L, WDR24 and WDR59; the interaction is negatively regulated by leucine. Conveys leucine availability via direct interaction with SEH1L and WDR24 components of the GATOR2 complex. Interacts with RRAGA, RRAGB, RRAGC and RRAGD; may function as a guanine nucleotide dissociation inhibitor for RRAGs and regulate them. May interact with the TORC2 complex. Interacts with KEAP1, RBX1, SQSTM and ULK1; to regulate the degradation of KEAP1. May also associate with the complex composed of TSC1, TSC2 and the AMP-responsive protein kinase/AMPK to regulate TORC1 signaling. May interact with PRDX1. Post-translationally, phosphorylated by ULK1 at multiple sites. In terms of processing, ubiquitinated at Lys-175 by RNF167 via 'Lys-63'-linked polyubiquitination in response to leucine deprivation: ubiquitination promotes SESN2-interaction with the GATOR2 complex, leading to inhibit the TORC1 signaling pathway. Deubiquitinated at Lys-175 by STAMBPL1, promoting the TORC1 signaling pathway. Ubiquitinated by RNF186; ubiquitination mediates proteasomal degradation.

Its subcellular location is the cytoplasm. The enzyme catalyses a hydroperoxide + L-cysteinyl-[protein] = S-hydroxy-L-cysteinyl-[protein] + an alcohol. Functions as an intracellular leucine sensor that negatively regulates the mTORC1 signaling pathway through the GATOR complex. In absence of leucine, binds the GATOR subcomplex GATOR2 and prevents mTORC1 signaling. Binding of leucine to SESN2 disrupts its interaction with GATOR2 thereby activating the TORC1 signaling pathway. This stress-inducible metabolic regulator also plays a role in protection against oxidative and genotoxic stresses. May negatively regulate protein translation in response to endoplasmic reticulum stress, via mTORC1. May positively regulate the transcription by NFE2L2 of genes involved in the response to oxidative stress by facilitating the SQSTM1-mediated autophagic degradation of KEAP1. May also mediate TP53 inhibition of TORC1 signaling upon genotoxic stress. Moreover, may prevent the accumulation of reactive oxygen species (ROS) through the alkylhydroperoxide reductase activity born by the N-terminal domain of the protein. Was originally reported to contribute to oxidative stress resistance by reducing PRDX1. However, this could not be confirmed. This Pongo abelii (Sumatran orangutan) protein is Sestrin-2.